The primary structure comprises 464 residues: Uronate isomerase (464 aa).

This sequence belongs to the metallo-dependent hydrolases superfamily. Uronate isomerase family.

It catalyses the reaction D-glucuronate = D-fructuronate. The catalysed reaction is aldehydo-D-galacturonate = keto-D-tagaturonate. Its pathway is carbohydrate metabolism; pentose and glucuronate interconversion. The sequence is that of Uronate isomerase from Caldicellulosiruptor saccharolyticus (strain ATCC 43494 / DSM 8903 / Tp8T 6331).